We begin with the raw amino-acid sequence, 615 residues long: Sodium-dependent neutral amino acid transporter B(0)AT3 (615 aa).

The Cytoplasmic segment spans residues 1-26; that stretch reads MAQASGMDPLVDIEDERPKWDNKLQY. Residues 27–47 traverse the membrane as a helical segment; that stretch reads LLSCIGFAVGLGNIWRFPYLC. Residues 48-52 lie on the Extracellular side of the membrane; sequence HTHGG. A helical membrane pass occupies residues 53 to 73; that stretch reads GAFLIPYFIALVFEGIPLFYI. At 74-105 the chain is on the cytoplasmic side; sequence ELAIGQRLRRGSIGVWKTISPYLGGVGLGCFS. The helical transmembrane segment at 106 to 126 threads the bilayer; that stretch reads VSFLVSLYYNTILLWVLWFFL. The Extracellular segment spans residues 127–177; the sequence is NSFQHPLPWSTCPLDLNRTGFVQECQSSGTVSYFWYRQTLNITSDISNTGT. Residues Asn143 and Asn167 are each glycosylated (N-linked (GlcNAc...) asparagine). Residues 178 to 198 form a helical membrane-spanning segment; sequence IQWKLFLCLVACWTTVYLCVI. At 199-206 the chain is on the cytoplasmic side; sequence RGIESTGK. A helical membrane pass occupies residues 207-227; that stretch reads VIYFTALFPYLVLTIFLIRGL. Topologically, residues 228–255 are extracellular; sequence TLPGATEGLTYLFTPNMKILQNSRVWLD. A helical membrane pass occupies residues 256 to 276; sequence AATQIFFSLSLAFGGHIAFAS. Residues 277–290 are Cytoplasmic-facing; the sequence is YNQPRNNCEKDAVT. A helical transmembrane segment spans residues 291–311; the sequence is IALVNSMTSLYASITIFSIMG. At 312–397 the chain is on the extracellular side; that stretch reads FKASNDYGRC…FTEAVLHMPG (86 aa). Asn353 is a glycosylation site (N-linked (GlcNAc...) asparagine). The chain crosses the membrane as a helical span at residues 398–418; that stretch reads ASVWSVLFFGMLFTLGLSSMF. At 419–442 the chain is on the cytoplasmic side; it reads GNMEGVITPLFDMGILPKGVPKET. Residues 443–463 form a helical membrane-spanning segment; the sequence is MTGVVCFICFLSAICFTLQSG. The Extracellular portion of the chain corresponds to 464-472; sequence SYWLEIFDS. A helical transmembrane segment spans residues 473 to 493; the sequence is FAASLNLIIFAFMEVVGVIHV. The Cytoplasmic portion of the chain corresponds to 494–520; sequence YGIKRFCDDIEWMTGRRPSLYWQVTWR. Residues 521–541 form a helical membrane-spanning segment; sequence VVSPMLLFGIFLSYIVLLAQS. Topologically, residues 542-571 are extracellular; the sequence is SPSYKAWNPQYEHFPSREEKLYPGWVQVTC. A helical transmembrane segment spans residues 572 to 592; sequence VLLSFLPSLWVPGIALAQLLF. The Cytoplasmic portion of the chain corresponds to 593-615; it reads QYRQRWKNTHLESALKPQESRGC.

The protein belongs to the sodium:neurotransmitter symporter (SNF) (TC 2.A.22) family. SLC6A18 subfamily. Interacts with CLTRN; this interaction regulates the trafficking of SLC6A18 to the cell membrane and its activity. As to expression, kidney-specific expression.

It localises to the apical cell membrane. The protein localises to the cell membrane. It carries out the reaction L-alanine(out) + chloride(out) + 2 Na(+)(out) = L-alanine(in) + chloride(in) + 2 Na(+)(in). It catalyses the reaction glycine(out) + chloride(out) + 2 Na(+)(out) = glycine(in) + chloride(in) + 2 Na(+)(in). The catalysed reaction is L-methionine(out) + chloride(out) + 2 Na(+)(out) = L-methionine(in) + chloride(in) + 2 Na(+)(in). The enzyme catalyses L-valine(out) + chloride(out) + 2 Na(+)(out) = L-valine(in) + chloride(in) + 2 Na(+)(in). It carries out the reaction L-isoleucine(out) + chloride(out) + 2 Na(+)(out) = L-isoleucine(in) + chloride(in) + 2 Na(+)(in). It catalyses the reaction L-serine(out) + chloride(out) + 2 Na(+)(out) = L-serine(in) + chloride(in) + 2 Na(+)(in). The catalysed reaction is L-leucine(out) + chloride(out) + 2 Na(+)(out) = L-leucine(in) + chloride(in) + 2 Na(+)(in). In terms of biological role, symporter that transports one amino acid molecule together with two sodium and one chloride ions in kidneys and plays a role in the neutral amino acids reabsorption. Preferentially transports neutral amino acids such as L-glycine and L-alanine but also other neutral amino acids. Required CLTRN for cell surface expression and for its amino acid transporter activity. The transport mechanism is pH-independent. The sequence is that of Sodium-dependent neutral amino acid transporter B(0)AT3 from Rattus norvegicus (Rat).